Reading from the N-terminus, the 843-residue chain is Protein PLASTID MOVEMENT IMPAIRED 1 (843 aa).

Positions 30–58 are enriched in polar residues; that stretch reads PQVSVGNRRTNSLALPRSSVPSLVTSADE. 2 disordered regions span residues 30–65 and 88–116; these read PQVS…ARAE and LEVE…SGVK. Residues 131 to 284 enclose the C2 NT-type domain; that stretch reads LVRIGMQKLS…ELALKLGFQI (154 aa). Disordered stretches follow at residues 300-412 and 450-472; these read FGMK…GTIG and MMKD…EEEQ. Positions 307-336 are enriched in polar residues; that stretch reads KPKNFANSFGRKQSKTSFSVPSPKMTSRSE. 2 positions are modified to phosphoserine: serine 314 and serine 328. The span at 365–381 shows a compositional bias: basic and acidic residues; sequence PEEKPVQKNDKPEQRAE. Threonine 404 carries the post-translational modification Phosphothreonine. Residue serine 407 is modified to Phosphoserine. Residue threonine 410 is modified to Phosphothreonine. Residues 456–472 show a composition bias toward acidic residues; sequence DGGDGETESQRLDEEEQ. Serine 507 carries the phosphoserine modification.

Expressed in leaves, stems, cauline leaves, and flowers but not in roots. Present in leaves in both mesophyll and pavement cells.

It localises to the cytoplasm. Necessary for chloroplast and nuclear photorelocation movements via the regulation of chloroplast-actin (cp-actin) filaments in mesophyll cells, and together with PMIR1, in pavement cells. Required component for both the low- and high-light-dependent chloroplast movement responses via an abscisic acid (ABA) pathway. Involved in the ABA response pathway during seed germination. Modulates ABA accumulation during periods of water deficit at the seedling stage. The polypeptide is Protein PLASTID MOVEMENT IMPAIRED 1 (Arabidopsis thaliana (Mouse-ear cress)).